Consider the following 316-residue polypeptide: Olfactory receptor 2K2 (316 aa).

Residues 1 to 20 (MQGENFTIWSIFFLEGFSQY) are Extracellular-facing. The N-linked (GlcNAc...) asparagine glycan is linked to Asn-5. The helical transmembrane segment at 21 to 41 (PGLEVVLFVFSLVMYLTTLLG) threads the bilayer. At 42–65 (NSTLILITILDSRLKTPMYLFLGN) the chain is on the cytoplasmic side. The helical transmembrane segment at 66-86 (LSFMDICYTSASVPTLLVNLL) threads the bilayer. The Extracellular segment spans residues 87-97 (SSQKTIIFSGC). Cys-97 and Cys-188 are oxidised to a cystine. A helical membrane pass occupies residues 98-118 (AVQMYLSLAMGSTECVLLAVM). Residues 119 to 143 (AYDRYVAICNPLRYSIIMNRCVCAR) are Cytoplasmic-facing. Residues 144-164 (MATVSWVTGCLTALLETSFAL) traverse the membrane as a helical segment. Residues 165–199 (QIPLCGNLIDHFTCEILAVLKLACTSSLLMNTIML) lie on the Extracellular side of the membrane. Residues 200 to 220 (VVSILLLPIPMLLVCISYIFI) traverse the membrane as a helical segment. Residues 221-238 (LSTILRITSAEGRNKAFS) lie on the Cytoplasmic side of the membrane. The chain crosses the membrane as a helical span at residues 239–259 (TCGAHLTVVILYYGAALSMYL). Over 260-270 (KPSSSNAQKID) the chain is Extracellular. Residues 271–291 (KIISLLYGVLTPMLNPIIYSL) form a helical membrane-spanning segment. Residues 292–316 (RNKEVKDAMKKLLGKITLHQTHEHL) lie on the Cytoplasmic side of the membrane.

It belongs to the G-protein coupled receptor 1 family.

The protein localises to the cell membrane. Its function is as follows. Odorant receptor. This chain is Olfactory receptor 2K2 (OR2K2), found in Homo sapiens (Human).